A 440-amino-acid chain; its full sequence is tRNA(Ile)-lysidine synthase (440 aa).

28 to 33 (SGGMDS) is a binding site for ATP.

This sequence belongs to the tRNA(Ile)-lysidine synthase family.

The protein resides in the cytoplasm. It carries out the reaction cytidine(34) in tRNA(Ile2) + L-lysine + ATP = lysidine(34) in tRNA(Ile2) + AMP + diphosphate + H(+). Its function is as follows. Ligates lysine onto the cytidine present at position 34 of the AUA codon-specific tRNA(Ile) that contains the anticodon CAU, in an ATP-dependent manner. Cytidine is converted to lysidine, thus changing the amino acid specificity of the tRNA from methionine to isoleucine. The sequence is that of tRNA(Ile)-lysidine synthase from Xanthomonas axonopodis pv. citri (strain 306).